Reading from the N-terminus, the 419-residue chain is Gamma-glutamyl phosphate reductase (419 aa).

This sequence belongs to the gamma-glutamyl phosphate reductase family.

The protein localises to the cytoplasm. The catalysed reaction is L-glutamate 5-semialdehyde + phosphate + NADP(+) = L-glutamyl 5-phosphate + NADPH + H(+). It participates in amino-acid biosynthesis; L-proline biosynthesis; L-glutamate 5-semialdehyde from L-glutamate: step 2/2. Its function is as follows. Catalyzes the NADPH-dependent reduction of L-glutamate 5-phosphate into L-glutamate 5-semialdehyde and phosphate. The product spontaneously undergoes cyclization to form 1-pyrroline-5-carboxylate. This is Gamma-glutamyl phosphate reductase from Syntrophomonas wolfei subsp. wolfei (strain DSM 2245B / Goettingen).